The sequence spans 110 residues: Methionine-R-sulfoxide reductase B1-A (110 aa).

Positions 1–104 constitute a MsrB domain; that stretch reads MSFCSFSGGE…FSSSLKFIPK (104 aa). Residues C23, C26, C69, and C72 each coordinate Zn(2+). The Nucleophile role is filled by U93. A non-standard amino acid (selenocysteine) is located at residue U93.

This sequence belongs to the MsrB Met sulfoxide reductase family. It depends on Zn(2+) as a cofactor. As to expression, in the embryo, expressed in the polster, paraxial mesoderm, tectum, otic vesicle and liver.

Its subcellular location is the cytoplasm. It localises to the nucleus. It is found in the cytoskeleton. The enzyme catalyses L-methionyl-[protein] + [thioredoxin]-disulfide + H2O = L-methionyl-(R)-S-oxide-[protein] + [thioredoxin]-dithiol. The catalysed reaction is [thioredoxin]-disulfide + L-methionine + H2O = L-methionine (R)-S-oxide + [thioredoxin]-dithiol. Methionine-sulfoxide reductase that specifically reduces methionine (R)-sulfoxide back to methionine. While in many cases, methionine oxidation is the result of random oxidation following oxidative stress, methionine oxidation is also a post-translational modification that takes place on specific residue. Acts as a regulator of actin assembly by reducing methionine (R)-sulfoxide mediated by MICALs (mical1, mical2 or mical3) on actin, thereby promoting filament repolymerization. Plays a role in innate immunity by reducing oxidized actin, leading to actin repolymerization in macrophages. The polypeptide is Methionine-R-sulfoxide reductase B1-A (msrb1) (Danio rerio (Zebrafish)).